A 294-amino-acid polypeptide reads, in one-letter code: Lysozyme M1 (294 aa).

The Ch-type lysozyme domain occupies 81–294; it reads GVQGIDVSHW…RLLALANNTA (214 aa). Active-site residues include Asp-86, Asp-175, and Glu-177. Residues Cys-185 and Cys-224 are joined by a disulfide bond.

The protein belongs to the glycosyl hydrolase 25 family.

It localises to the secreted. The catalysed reaction is Hydrolysis of (1-&gt;4)-beta-linkages between N-acetylmuramic acid and N-acetyl-D-glucosamine residues in a peptidoglycan and between N-acetyl-D-glucosamine residues in chitodextrins.. Functionally, this enzyme has both lysozyme (acetylmuramidase) and diacetylmuramidase activities. This chain is Lysozyme M1 (acm), found in Streptomyces globisporus.